An 88-amino-acid chain; its full sequence is Small ribosomal subunit protein uS19 (88 aa).

The protein belongs to the universal ribosomal protein uS19 family.

In terms of biological role, protein S19 forms a complex with S13 that binds strongly to the 16S ribosomal RNA. In Chlamydia muridarum (strain MoPn / Nigg), this protein is Small ribosomal subunit protein uS19 (rpsS).